Consider the following 283-residue polypeptide: ATP phosphoribosyltransferase (283 aa).

It belongs to the ATP phosphoribosyltransferase family. Long subfamily. Mg(2+) serves as cofactor.

The protein resides in the cytoplasm. It catalyses the reaction 1-(5-phospho-beta-D-ribosyl)-ATP + diphosphate = 5-phospho-alpha-D-ribose 1-diphosphate + ATP. Its pathway is amino-acid biosynthesis; L-histidine biosynthesis; L-histidine from 5-phospho-alpha-D-ribose 1-diphosphate: step 1/9. Its activity is regulated as follows. Feedback inhibited by histidine. Its function is as follows. Catalyzes the condensation of ATP and 5-phosphoribose 1-diphosphate to form N'-(5'-phosphoribosyl)-ATP (PR-ATP). Has a crucial role in the pathway because the rate of histidine biosynthesis seems to be controlled primarily by regulation of HisG enzymatic activity. The chain is ATP phosphoribosyltransferase from Parabacteroides distasonis (strain ATCC 8503 / DSM 20701 / CIP 104284 / JCM 5825 / NCTC 11152).